Here is a 196-residue protein sequence, read N- to C-terminus: Small ribosomal subunit protein uS4c (196 aa).

The segment at 17–36 (ALPGLTRKTPKSGSNLKKKF) is disordered. The region spanning 89 to 169 (MRLDNILFRL…LPKHLTIDTL (81 aa)) is the S4 RNA-binding domain.

The protein belongs to the universal ribosomal protein uS4 family. In terms of assembly, part of the 30S ribosomal subunit. Contacts protein S5. The interaction surface between S4 and S5 is involved in control of translational fidelity.

The protein localises to the plastid. The protein resides in the chloroplast. Its function is as follows. One of the primary rRNA binding proteins, it binds directly to 16S rRNA where it nucleates assembly of the body of the 30S subunit. Functionally, with S5 and S12 plays an important role in translational accuracy. This is Small ribosomal subunit protein uS4c (rps4) from Festuca gigantea (Giant fescue).